The following is a 565-amino-acid chain: Adenine deaminase (565 aa).

Belongs to the metallo-dependent hydrolases superfamily. Adenine deaminase family. Requires Mn(2+) as cofactor.

The catalysed reaction is adenine + H2O + H(+) = hypoxanthine + NH4(+). The sequence is that of Adenine deaminase from Cereibacter sphaeroides (strain KD131 / KCTC 12085) (Rhodobacter sphaeroides).